The following is a 100-amino-acid chain: Enhancer of yellow 2 transcription factor (100 aa).

It belongs to the ENY2 family. As to quaternary structure, component of the nuclear pore complex (NPC)-associated AMEX complex (anchoring and mRNA export complex), composed of at least e(y)2 and xmas-2. Component of the SAGA transcription coactivator-HAT complexes, at least composed of Ada2b, e(y)2, Pcaf/Gcn5, Taf10 and Nipped-A/Trrap. Within the SAGA complex, e(y)2, Sgf11, and not/nonstop form an additional subcomplex of SAGA called the DUB module (deubiquitination module). Component of the THO complex, composed of at least e(y)2, HPR1, THO2, THOC5, THOC6 and THOC7. Interacts with e(y)1. Interacts with su(Hw) (via zinc fingers). Interacts with xmas-2; required for localization to the nuclear periphery. Interacts with the nuclear pore complex (NPC).

The protein localises to the nucleus. Its subcellular location is the nucleoplasm. The protein resides in the cytoplasm. Its function is as follows. Involved in mRNA export coupled transcription activation by association with both the AMEX and the SAGA complexes. The SAGA complex is a multiprotein complex that activates transcription by remodeling chromatin and mediating histone acetylation and deubiquitination. Within the SAGA complex, participates in a subcomplex that specifically deubiquitinates histone H2B. The SAGA complex is recruited to specific gene promoters by activators, where it is required for transcription. Required for nuclear receptor-mediated transactivation. Involved in transcription elongation by recruiting the THO complex onto nascent mRNA. The AMEX complex functions in docking export-competent ribonucleoprotein particles (mRNPs) to the nuclear entrance of the nuclear pore complex (nuclear basket). AMEX participates in mRNA export and accurate chromatin positioning in the nucleus by tethering genes to the nuclear periphery. The polypeptide is Enhancer of yellow 2 transcription factor (Drosophila persimilis (Fruit fly)).